Reading from the N-terminus, the 594-residue chain is Proteasome-associated ATPase (594 aa).

The segment covering 1 to 10 (MMETPNNDSS) has biased composition (polar residues). The interval 1-23 (MMETPNNDSSRTPDEAAGAPDPE) is disordered. Residues 35–86 (ADRQVNILRDKLRHIDRQLAAATQNNSKLVGMLETAKAEILRLKNALDQEGQ) adopt a coiled-coil conformation. An ATP-binding site is contributed by 282 to 287 (GCGKTL). Residues 593 to 594 (YL) form a docks into pockets in the proteasome alpha-ring region.

It belongs to the AAA ATPase family. Homohexamer. Assembles into a hexameric ring structure that caps the 20S proteasome core. Strongly interacts with the prokaryotic ubiquitin-like protein Pup through a hydrophobic interface; the interacting region of ARC lies in its N-terminal coiled-coil domain. There is one Pup binding site per ARC hexamer ring. Upon ATP-binding, the C-terminus of ARC interacts with the alpha-rings of the proteasome core, possibly by binding to the intersubunit pockets.

It participates in protein degradation; proteasomal Pup-dependent pathway. In terms of biological role, ATPase which is responsible for recognizing, binding, unfolding and translocation of pupylated proteins into the bacterial 20S proteasome core particle. May be essential for opening the gate of the 20S proteasome via an interaction with its C-terminus, thereby allowing substrate entry and access to the site of proteolysis. Thus, the C-termini of the proteasomal ATPase may function like a 'key in a lock' to induce gate opening and therefore regulate proteolysis. The polypeptide is Proteasome-associated ATPase (Arthrobacter sp. (strain FB24)).